Consider the following 93-residue polypeptide: Small ribosomal subunit protein uS19m (93 aa).

The protein belongs to the universal ribosomal protein uS19 family.

Its subcellular location is the mitochondrion. The chain is Small ribosomal subunit protein uS19m (RPS19) from Marchantia polymorpha (Common liverwort).